A 176-amino-acid polypeptide reads, in one-letter code: Lipoprotein signal peptidase (176 aa).

4 consecutive transmembrane segments (helical) span residues 10-30 (LFQFYPHNLIWLGLSVLAIVL), 48-68 (VPVLPFLNWTLLHNYGAAFSF), 78-98 (YFFTSLAGLVSILFVFWLLRM), and 102-122 (MVVLPVAIALILGGALGNLID). Active-site residues include D131 and D149. Residues 141–161 (HFPAFNIADSAITLGTILLLI) form a helical membrane-spanning segment.

The protein belongs to the peptidase A8 family.

The protein resides in the cell inner membrane. The enzyme catalyses Release of signal peptides from bacterial membrane prolipoproteins. Hydrolyzes -Xaa-Yaa-Zaa-|-(S,diacylglyceryl)Cys-, in which Xaa is hydrophobic (preferably Leu), and Yaa (Ala or Ser) and Zaa (Gly or Ala) have small, neutral side chains.. It participates in protein modification; lipoprotein biosynthesis (signal peptide cleavage). In terms of biological role, this protein specifically catalyzes the removal of signal peptides from prolipoproteins. The polypeptide is Lipoprotein signal peptidase (Acinetobacter baumannii (strain SDF)).